Reading from the N-terminus, the 278-residue chain is Replication protein A 32 kDa subunit B (278 aa).

Positions 70 to 143 (VVIVGRISRM…RSVNVFSVRP (74 aa)) form a DNA-binding region, OB.

Belongs to the replication factor A protein 2 family. As to quaternary structure, heterotrimer of RPA1, RPA2 and RPA3 (canonical replication protein A complex). Post-translationally, phosphorylated in a cell-cycle-dependent manner (from the S phase until mitosis). In response to DNA damage, recruited to DNA-repair nuclear foci, as a hypophosphorylated form.

It is found in the nucleus. Its function is as follows. Component of the replication protein A complex (RPA) required for DNA recombination, repair and replication. The activity of RPA is mediated by single-stranded DNA binding and protein interactions. Required fo cell division in meristems. Involved in the maintenance of transcriptional epigenetic gene silencing (TGS) at specific loci (including some transposons) by regulating histone H3 acetylation, 'Lys-4' and 'Lys-9' methylation. The polypeptide is Replication protein A 32 kDa subunit B (RPA2B) (Arabidopsis thaliana (Mouse-ear cress)).